Reading from the N-terminus, the 131-residue chain is ATP synthase epsilon chain, chloroplastic (131 aa).

The protein belongs to the ATPase epsilon chain family. As to quaternary structure, F-type ATPases have 2 components, CF(1) - the catalytic core - and CF(0) - the membrane proton channel. CF(1) has five subunits: alpha(3), beta(3), gamma(1), delta(1), epsilon(1). CF(0) has three main subunits: a, b and c.

The protein resides in the plastid. It is found in the chloroplast thylakoid membrane. Produces ATP from ADP in the presence of a proton gradient across the membrane. The protein is ATP synthase epsilon chain, chloroplastic of Oltmannsiellopsis viridis (Marine flagellate).